The following is a 465-amino-acid chain: Alpha-2A adrenergic receptor (465 aa).

The Extracellular segment spans residues 1–48; it reads MFRQEQPLAEGSFAPMGSLQPDAGNSSWNGTEAPGGGTRATPYSLQVT. Residues N25 and N29 are each glycosylated (N-linked (GlcNAc...) asparagine). A helical transmembrane segment spans residues 49-74; that stretch reads LTLVCLAGLLMLFTVFGNVLVIIAVF. Over 75 to 85 the chain is Cytoplasmic; sequence TSRALKAPQNL. Residues 86–111 form a helical membrane-spanning segment; it reads FLVSLASADILVATLVIPFSLANEVM. At 112–121 the chain is on the extracellular side; it reads GYWYFGKVWC. C121 and C203 are oxidised to a cystine. The chain crosses the membrane as a helical span at residues 122-144; the sequence is EIYLALDVLFCTSSIVHLCAISL. The Cytoplasmic portion of the chain corresponds to 145–164; it reads DRYWSITQAIEYNLKRTPRR. A helical membrane pass occupies residues 165 to 188; sequence IKAIIVTVWVISAVISFPPLISIE. Residues 189 to 207 lie on the Extracellular side of the membrane; that stretch reads KKGAGGGQQPAEPSCKIND. The helical transmembrane segment at 208 to 232 threads the bilayer; that stretch reads QKWYVISSSIGSFFAPCLIMILVYV. Residues 233–389 lie on the Cytoplasmic side of the membrane; that stretch reads RIYQIAKRRT…RQNREKRFTF (157 aa). The interval 242–378 is disordered; it reads TRVPPSRRGP…GGGAKASRWR (137 aa). Positions 313–330 are enriched in basic and acidic residues; sequence SSEHAERPPGPRRPDRGP. S346 bears the Phosphoserine mark. Over residues 353 to 363 the composition is skewed to gly residues; that stretch reads GAAGPGASGSG. R368 carries the omega-N-methylarginine modification. A helical transmembrane segment spans residues 390-414; sequence VLAVVIGVFVVCWFPFFFTYTLIAV. The Extracellular segment spans residues 415-424; that stretch reads GCPVPSQLFN. The helical transmembrane segment at 425–445 threads the bilayer; it reads FFFWFGYCNSSLNPVIYTIFN. Over 446–465 the chain is Cytoplasmic; the sequence is HDFRRAFKKILCRGDRKRIV. C457 carries S-palmitoyl cysteine lipidation.

Belongs to the G-protein coupled receptor 1 family. Adrenergic receptor subfamily. ADRA2A sub-subfamily.

The protein resides in the cell membrane. In terms of biological role, alpha-2 adrenergic receptors mediate the catecholamine-induced inhibition of adenylate cyclase through the action of G proteins. The polypeptide is Alpha-2A adrenergic receptor (Mus musculus (Mouse)).